The primary structure comprises 246 residues: MYLLIDVGNSRIKWLYGNKVPSTIEAVSYKQDWQMKLIRAWHLLPEPEAIALSSVNKAEITTTIEEIVRQLWHKTVKIFVSQKQTNHTLTVVYQKPEKLGSDRYLAMLGARSLCHDPLCVVGCGTAITLDAVDGDGRHLGGFILPGMRLAENALLQNTQKLVPMRWTPHLLGNDTASCISAGIHHALPAGVDHIIDELEGQCGYYFKRFAFGGDAQILFGNRPTYRIEPDLIFGGMFAHLSPPKQV.

6–13 (DVGNSRIK) lines the ATP pocket. Substrate-binding positions include tyrosine 93 and 100–103 (GSDR). Catalysis depends on aspartate 102, which acts as the Proton acceptor. Residue threonine 125 participates in ATP binding. Substrate is bound at residue threonine 175.

This sequence belongs to the type III pantothenate kinase family. As to quaternary structure, homodimer. The cofactor is NH4(+). K(+) is required as a cofactor.

It is found in the cytoplasm. The enzyme catalyses (R)-pantothenate + ATP = (R)-4'-phosphopantothenate + ADP + H(+). The protein operates within cofactor biosynthesis; coenzyme A biosynthesis; CoA from (R)-pantothenate: step 1/5. In terms of biological role, catalyzes the phosphorylation of pantothenate (Pan), the first step in CoA biosynthesis. This Dichelobacter nodosus (strain VCS1703A) protein is Type III pantothenate kinase.